The primary structure comprises 887 residues: MGEAEKFHYIYSCDLDINVQLKIGSLEGKREQKSYKAVLEDPMLKFSGLYQETCSDLYVTCQVFAEGKPLALPVRTSYKAFSTRWNWNEWLKLPVKYPDLPRNAQVALTIWDVYGPGKAVPVGGTTVSLFGKYGMFRQGMHDLKVWPNVEADGSEPTKTPGRTSSTLSEDQMSRLAKLTKAHRQGHMVKVDWLDRLTFREIEMINESEKRSSNFMYLMVEFRCVKCDDKEYGIVYYEKDGDESSPILTSFELVKVPDPQMSMENLVESKHHKLARSLRSGPSDHDLKPNAATRDQLNIIVSYPPTKQLTYEEQDLVWKFRYYLTNQEKALTKFLKCVNWDLPQEAKQALELLGKWKPMDVEDSLELLSSHYTNPTVRRYAVARLRQADDEDLLMYLLQLVQALKYENFDDIKNGLEPTKKDSQSSVSENVSNSGINSAEIDSSQIITSPLPSVSSPPPASKTKEVPDGENLEQDLCTFLISRACKNSTLANYLYWYVIVECEDQDTQQRDPKTHEMYLNVMRRFSQALLKGDKSVRVMRSLLAAQQTFVDRLVHLMKAVQRESGNRKKKNERLQALLGDNEKMNLSDVELIPLPLEPQVKIRGIIPETATLFKSALMPAQLFFKTEDGGKYPVIFKHGDDLRQDQLILQIISLMDKLLRKENLDLKLTPYKVLATSTKHGFMQFIQSVPVAEVLDTEGSIQNFFRKYAPSENGPNGISAEVMDTYVKSCAGYCVITYILGVGDRHLDNLLLTKTGKLFHIDFGYILGRDPKPLPPPMKLNKEMVEGMGGTQSEQYQEFRKQCYTAFLHLRRYSNLILNLFSLMVDANIPDIALEPDKTVKKVQDKFRLDLSDEEAVHYMQSLIDESVHALFAAVVEQIHKFAQYWRK.

Residues 35 to 184 enclose the C2 PI3K-type domain; the sequence is YKAVLEDPML…LAKLTKAHRQ (150 aa). Residues 149–170 are disordered; it reads VEADGSEPTKTPGRTSSTLSED. Over residues 156 to 170 the composition is skewed to polar residues; it reads PTKTPGRTSSTLSED. Position 163 is a phosphothreonine; by AMPK (Thr163). Ser165 is modified (phosphoserine; by AMPK). A phosphoserine mark is found at Ser244, Ser261, and Ser282. Residues 283 to 520 form the PIK helical domain; the sequence is DHDLKPNAAT…PKTHEMYLNV (238 aa). A disordered region spans residues 447–467; sequence TSPLPSVSSPPPASKTKEVPD. The PI3K/PI4K catalytic domain maps to 605–871; that stretch reads IPETATLFKS…LIDESVHALF (267 aa). Residues 611–617 are G-loop; the sequence is LFKSALM. The catalytic loop stretch occupies residues 740–748; that stretch reads GVGDRHLDN. The tract at residues 759–780 is activation loop; the sequence is HIDFGYILGRDPKPLPPPMKLN.

Belongs to the PI3/PI4-kinase family. In terms of assembly, component of the PI3K (PI3KC3/PI3K-III/class III phosphatidylinositol 3-kinase) complex the core of which is composed of the catalytic subunit PIK3C3, the regulatory subunit PIK3R4 and BECN1 associating with additional regulatory/auxiliary subunits to form alternative complex forms. Alternative complex forms containing a fourth regulatory subunit in a mutually exclusive manner are: the PI3K complex I (PI3KC3-C1) containing ATG14, and the PI3K complex II (PI3KC3-C2) containing UVRAG. PI3KC3-C1 displays a V-shaped architecture with PIK3R4 serving as a bridge between PIK3C3 and the ATG14:BECN1 subcomplex. Both, PI3KC3-C1 and PI3KC3-C2, can associate with further regulatory subunits such as RUBCN, SH3GLB1/Bif-1 and AMBRA1. PI3KC3-C1 probably associates with PIK3CB. Interacts with RAB7A in the presence of PIK3R4. Interacts with AMBRA1. Interacts with BECN1P1/BECN2. Interacts with SLAMF1. May be a component of a complex composed of RAB5A (in GDP-bound form), DYN2 and PIK3C3. Interacts with NCKAP1L. Interacts with ATG14; this interaction is increased in the absence of TMEM39A. Interacts with STEEP1; the interaction is STING1-dependent and required for trafficking of STING1 from the endoplasmic reticulum. Interacts with YWHAG. Interacts with ARMC3. Mn(2+) serves as cofactor. Post-translationally, ubiquitinated via 'Lys-29'- and 'Lys-48'-linked ubiquitination by UBE3C, promoting its degradation. Deubiquitination by ZRANB1/TRABID promotes its stabilization, leading to autophagosome maturation. As to expression, ubiquitously expressed, with a highest expression in skeletal muscle.

The protein localises to the midbody. It localises to the late endosome. Its subcellular location is the cytoplasmic vesicle. It is found in the autophagosome. The enzyme catalyses a 1,2-diacyl-sn-glycero-3-phospho-(1D-myo-inositol) + ATP = a 1,2-diacyl-sn-glycero-3-phospho-(1D-myo-inositol-3-phosphate) + ADP + H(+). Catalytic subunit of the PI3K complex that mediates formation of phosphatidylinositol 3-phosphate; different complex forms are believed to play a role in multiple membrane trafficking pathways: PI3KC3-C1 is involved in initiation of autophagosomes and PI3KC3-C2 in maturation of autophagosomes and endocytosis. As part of PI3KC3-C1, promotes endoplasmic reticulum membrane curvature formation prior to vesicle budding. Involved in regulation of degradative endocytic trafficking and required for the abscission step in cytokinesis, probably in the context of PI3KC3-C2. Involved in the transport of lysosomal enzyme precursors to lysosomes. Required for transport from early to late endosomes. In terms of biological role, (Microbial infection) Kinase activity is required for SARS coronavirus-2/SARS-CoV-2 replication. This is Phosphatidylinositol 3-kinase catalytic subunit type 3 from Homo sapiens (Human).